A 390-amino-acid chain; its full sequence is Transforming protein cbl (390 aa).

Residues 1-52 (ASAGGGCRRGPSFSPGSIPSLAAERAPDPPLAMAGNVKKSSGAGGGGSGGSG) form a disordered region. Residues 42-52 (GAGGGGSGGSG) are compositionally biased toward gly residues. The tract at residues 77–205 (PPCTVDKKMV…KGIFPSGLFQ (129 aa)) is 4H. Positions 77-381 (PPCTVDKKMV…GRNQNPDLTG (305 aa)) constitute a Cbl-PTB domain. The EF-hand-like stretch occupies residues 206–278 (GDTFRITKAD…FEFDIFTRLF (73 aa)). D259, T261, N263, Y265, and E270 together coordinate Ca(2+). An SH2-like region spans residues 279-381 (QPWSSLLRNW…GRNQNPDLTG (103 aa)). Residue R324 participates in 4-O-phospho-L-tyrosine binding.

Functionally, induces early B-lineage lymphomas. The chain is Transforming protein cbl (V-CBL) from Mus musculus (Mouse).